Consider the following 320-residue polypeptide: Prophage side tail fiber protein homolog StfQ (320 aa).

Disordered stretches follow at residues 147-213 and 241-270; these read SGRA…HKSS and TTSG…TAAS. 2 stretches are compositionally biased toward polar residues: residues 172–206 and 241–258; these read DLGT…NSAG and TTSG…SSDG. Residues 261 to 270 show a composition bias toward low complexity; that stretch reads THSLSGTAAS.

Belongs to the tail fiber family.

The chain is Prophage side tail fiber protein homolog StfQ (stfQ) from Escherichia coli (strain K12).